Here is a 328-residue protein sequence, read N- to C-terminus: Malate dehydrogenase (328 aa).

An NAD(+)-binding site is contributed by 11-17 (GAAGQIG). Positions 94 and 100 each coordinate substrate. Residues Asn-107, Gln-114, and 131-133 (VGN) each bind NAD(+). Residues Asn-133 and Arg-164 each coordinate substrate. The active-site Proton acceptor is the His-189.

The protein belongs to the LDH/MDH superfamily. MDH type 2 family.

The enzyme catalyses (S)-malate + NAD(+) = oxaloacetate + NADH + H(+). Its function is as follows. Catalyzes the reversible oxidation of malate to oxaloacetate. This chain is Malate dehydrogenase, found in Xylella fastidiosa (strain M23).